Consider the following 325-residue polypeptide: Glutarate 2-hydroxylase (325 aa).

Histidine 160, aspartate 162, and histidine 292 together coordinate Fe cation.

The protein belongs to the glutarate hydroxylase family. As to quaternary structure, homotetramer. It depends on Fe(2+) as a cofactor.

The enzyme catalyses glutarate + 2-oxoglutarate + O2 = (S)-2-hydroxyglutarate + succinate + CO2. It participates in amino-acid degradation. Functionally, acts as an alpha-ketoglutarate-dependent dioxygenase catalyzing hydroxylation of glutarate (GA) to L-2-hydroxyglutarate (L2HG). Functions in a L-lysine degradation pathway that proceeds via cadaverine, glutarate and L-2-hydroxyglutarate. In Citrobacter koseri (strain ATCC BAA-895 / CDC 4225-83 / SGSC4696), this protein is Glutarate 2-hydroxylase.